The sequence spans 869 residues: Speckle targeted PIP5K1A-regulated poly(A) polymerase (869 aa).

The Matrin-type zinc finger occupies 16-46 (FRCCLCHVTTANRPSLDAHLGGRKHRHLVEL). Residues 56–128 (RSVFVSGFPR…HRLRVRPREQ (73 aa)) form the RRM domain. The disordered stretch occupies residues 111 to 147 (QPQHTLGGHRLRVRPREQKEFQSPASKSPKGAAPDSH). Serine 205 contacts ATP. Residues aspartate 216 and aspartate 218 each coordinate Mg(2+). UTP is bound by residues aspartate 216 and aspartate 218. Positions 252 to 315 (QALACTPASP…PASPLQEDRG (64 aa)) are disordered. Residues 259–269 (ASPPDSQPPSP) are compositionally biased toward pro residues. Over residues 279 to 290 (TPSSSLAPQTPD) the composition is skewed to polar residues. An ATP-binding site is contributed by asparagine 391. Asparagine 391, arginine 413, tyrosine 431, and histidine 548 together coordinate UTP. A PAP-associated domain is found at 490-548 (LSSLLAQFFSCVSCWDLRGSLLSLREGQALPVAGDLPSNRWEGLRLGPMNLQDPFDLSH). The interval 597–869 (SSPSSLLSAT…VFLPQALRNL (273 aa)) is KA1; binds the bulging loops of U6 snRNA but is dispensable for terminal uridylyltransferase activity. Composition is skewed to basic and acidic residues over residues 637–648 (GTKRLRSDRGGP) and 660–686 (LKLD…HSED). Disordered regions lie at residues 637–686 (GTKR…HSED) and 720–755 (LATG…TGRG). Phosphoserine is present on residues serine 684 and serine 748.

It belongs to the DNA polymerase type-B-like family. Associates with the cleavage and polyadenylation specificity factor (CPSF) complex. Interacts with CPSF1 and CPSF3; the interaction is direct. Interacts with PIP5K1A. The cofactor is Mg(2+). Mn(2+) serves as cofactor. Post-translationally, phosphorylated by CK1 in the proline-rich (Pro-rich) region.

It is found in the nucleus. The protein resides in the nucleolus. It localises to the nucleus speckle. The enzyme catalyses RNA(n) + UTP = RNA(n)-3'-uridine ribonucleotide + diphosphate. It catalyses the reaction RNA(n) + ATP = RNA(n)-3'-adenine ribonucleotide + diphosphate. Its activity is regulated as follows. Adenylyltransferase activity is specifically phosphatidylinositol 4,5-bisphosphate (PtdIns(4,5)P2). Functionally, poly(A) polymerase that creates the 3'-poly(A) tail of specific pre-mRNAs. Localizes to nuclear speckles together with PIP5K1A and mediates polyadenylation of a select set of mRNAs, such as HMOX1. In addition to polyadenylation, it is also required for the 3'-end cleavage of pre-mRNAs: binds to the 3'UTR of targeted pre-mRNAs and promotes the recruitment and assembly of the CPSF complex on the 3'UTR of pre-mRNAs. In addition to adenylyltransferase activity, also has uridylyltransferase activity. However, the ATP ratio is higher than UTP in cells, suggesting that it functions primarily as a poly(A) polymerase. Acts as a specific terminal uridylyltransferase for U6 snRNA in vitro: responsible for a controlled elongation reaction that results in the restoration of the four 3'-terminal UMP-residues found in newly transcribed U6 snRNA. Not involved in replication-dependent histone mRNA degradation. In Ailuropoda melanoleuca (Giant panda), this protein is Speckle targeted PIP5K1A-regulated poly(A) polymerase (TUT1).